The sequence spans 518 residues: Calcium/calmodulin-dependent protein kinase kinase cmkC (518 aa).

Residues Met-1–Gly-72 are disordered. 2 stretches are compositionally biased toward polar residues: residues Ser-8–Ser-17 and Asn-60–Asp-71. One can recognise a Protein kinase domain in the interval Tyr-81–Val-376. ATP is bound by residues Ile-87–Val-95 and Lys-109. Positions Arg-119–Thr-149 are disordered. Asp-243 acts as the Proton acceptor in catalysis. The interval Phe-404–Lys-409 is autoinhibitory domain. The tract at residues Ile-407–Thr-431 is calmodulin-binding. Residues Pro-453–Lys-472 form a disordered region.

It belongs to the protein kinase superfamily. Ser/Thr protein kinase family.

The enzyme catalyses L-seryl-[protein] + ATP = O-phospho-L-seryl-[protein] + ADP + H(+). It catalyses the reaction L-threonyl-[protein] + ATP = O-phospho-L-threonyl-[protein] + ADP + H(+). Its activity is regulated as follows. Activated by Ca(2+)/calmodulin. Binding of calmodulin may relieve intrasteric autoinhibition. Its function is as follows. Calcium/calmodulin-dependent protein kinase that operates in the calcium-triggered CaMKK-CaMK1 signaling cascade. Phosphorylates and activates cmkB in vitro. Required in G1-phase of the cell cycle for proper timing of the initial nuclear division after germination as well as for subsequent nuclear division cycles. Required for the normal temporal regulation of nimX activity. The protein is Calcium/calmodulin-dependent protein kinase kinase cmkC of Emericella nidulans (Aspergillus nidulans).